The primary structure comprises 199 residues: Recombination protein RecR (199 aa).

The C4-type zinc-finger motif lies at 56–71 (CTVCFNVTEQETCNIC). A Toprim domain is found at 79 to 174 (SVICVVEESK…TVTRLASGLP (96 aa)).

Belongs to the RecR family.

In terms of biological role, may play a role in DNA repair. It seems to be involved in an RecBC-independent recombinational process of DNA repair. It may act with RecF and RecO. This chain is Recombination protein RecR, found in Paenarthrobacter aurescens (strain TC1).